Consider the following 195-residue polypeptide: CASP-like protein IN26 (195 aa).

Residues Val-1–Glu-26 are Cytoplasmic-facing. A helical transmembrane segment spans residues Ala-27–Ser-47. Over Lys-48 to Pro-75 the chain is Extracellular. A helical transmembrane segment spans residues Ala-76 to Leu-96. The Cytoplasmic portion of the chain corresponds to Ala-97 to Asp-120. The chain crosses the membrane as a helical span at residues Val-121 to Lys-143. The Extracellular segment spans residues Gly-144–His-163. The helical transmembrane segment at Leu-164–Leu-184 threads the bilayer. At Ser-185 to Lys-195 the chain is on the cytoplasmic side.

The protein belongs to the Casparian strip membrane proteins (CASP) family. In terms of assembly, homodimer and heterodimers.

It localises to the cell membrane. In Ipomoea nil (Japanese morning glory), this protein is CASP-like protein IN26 (IN26).